The chain runs to 209 residues: Mitochondrial import inner membrane translocase subunit Tim23 (209 aa).

Transmembrane regions (helical) follow at residues 73–93, 125–145, and 172–194; these read FELAFFTIGGCCMTVAAFGAM, ALWANTLGSLALLYSAFGVII, and GGLRGIARGGLTGLTLTSLYALY.

Belongs to the Tim17/Tim22/Tim23 family. Component of the TIM23 complex at least composed of TIMM23, TIMM17 (TIMM17A or TIMM17B) and TIMM50; within this complex, directly interacts with TIMM50. The complex interacts with the TIMM44 component of the PAM complex and with DNAJC15. Upon mitochondrial depolarization, interacts with PINK1; the interaction is required for PINK1 accumulation at the outer mitochondrial membrane, kinase activation by autophosphorylation and PRKN recruitement to mitochondria.

The protein localises to the mitochondrion inner membrane. In terms of biological role, essential component of the TIM23 complex, a complex that mediates the translocation of transit peptide-containing proteins across the mitochondrial inner membrane. Has a role in the activation of stress-induced mitophagy by protecting PINK1 from OMA1-mediated degradation and facilitating its accumulation at the outer mitochondrial membrane in response to depolarization. In Pongo abelii (Sumatran orangutan), this protein is Mitochondrial import inner membrane translocase subunit Tim23 (TIMM23).